We begin with the raw amino-acid sequence, 247 residues long: DNA polymerase sliding clamp (247 aa).

The protein belongs to the PCNA family. In terms of assembly, homotrimer. The subunits circularize to form a toroid; DNA passes through its center. Replication factor C (RFC) is required to load the toroid on the DNA.

Its function is as follows. Sliding clamp subunit that acts as a moving platform for DNA processing. Responsible for tethering the catalytic subunit of DNA polymerase and other proteins to DNA during high-speed replication. The polypeptide is DNA polymerase sliding clamp (Methanospirillum hungatei JF-1 (strain ATCC 27890 / DSM 864 / NBRC 100397 / JF-1)).